The sequence spans 391 residues: Period circadian protein (391 aa).

Disordered regions lie at residues 27–121 (VTAP…PPVT), 163–188 (MLEYSGPGPGHGHGIKRGGSHSWEGE), 241–270 (GSSAGGNGSGTGNNNGNGNNNQPTTNQFTQ), and 328–357 (SPSGTSPNPNRPHKHAHVHSSSEKPSTSQA). Gly residues predominate over residues 93 to 114 (GTSGTGNSGDGGGGGGADGPGS). A compositionally biased stretch (gly residues) spans 241 to 255 (GSSAGGNGSGTGNNN).

Forms a heterodimer with timeless (TIM); the complex then translocates into the nucleus. Phosphorylated with a circadian rhythmicity, probably by the double-time protein (dbt). Phosphorylation could be implicated in the stability of per monomer and in the formation of heterodimer per-tim.

Its subcellular location is the nucleus. It localises to the cytoplasm. The protein resides in the perinuclear region. Functionally, essential for biological clock functions. Determines the period length of circadian and ultradian rhythms; an increase in PER dosage leads to shortened circadian rhythms and a decrease leads to lengthened circadian rhythms. Essential for the circadian rhythmicity of locomotor activity, eclosion behavior, and for the rhythmic component of the male courtship song that originates in the thoracic nervous system. The biological cycle depends on the rhythmic formation and nuclear localization of the TIM-PER complex. Light induces the degradation of TIM, which promotes elimination of PER. Nuclear activity of the heterodimer coordinatively regulates PER and TIM transcription through a negative feedback loop. Behaves as a negative element in circadian transcriptional loop. Does not appear to bind DNA, suggesting indirect transcriptional inhibition. The sequence is that of Period circadian protein (per) from Drosophila insularis (Fruit fly).